The chain runs to 653 residues: Brain-enriched guanylate kinase-associated protein (653 aa).

Position 186 is a phosphotyrosine (tyrosine 186). The segment at proline 241 to tyrosine 271 is disordered. Over residues serine 243–serine 252 the composition is skewed to polar residues. 4 positions are modified to phosphoserine: serine 249, serine 278, serine 295, and serine 314. Residues arginine 288–glycine 329 form a disordered region. Acidic residues predominate over residues threonine 315–glutamate 327. Residues serine 400 and serine 427 each carry the phosphoserine modification. Position 435 is an asymmetric dimethylarginine (arginine 435). Residues serine 523, serine 533, serine 535, serine 558, serine 560, serine 564, serine 613, and serine 623 each carry the phosphoserine modification. Residues glycine 587–asparagine 653 form a disordered region.

In terms of assembly, interacts with DLG4 and DLGAP1 and forms a ternary complex.

The protein localises to the cytoplasm. Its subcellular location is the membrane. May sustain the structure of the postsynaptic density (PSD). The sequence is that of Brain-enriched guanylate kinase-associated protein (BEGAIN) from Ovis aries (Sheep).